Reading from the N-terminus, the 585-residue chain is Ras-specific guanine nucleotide-releasing factor RalGPS1 (585 aa).

Residues 50–289 enclose the Ras-GEF domain; sequence TPEEFASQIT…YKLSLRIEPG (240 aa). Disordered regions lie at residues 289 to 342 and 378 to 410; these read GSSS…KSHS and RSPR…SEEM. A compositionally biased stretch (low complexity) spans 303–312; the sequence is AGPSAGSSSA. Residues 330–333 carry the PXXP motif; sequence PTPP. A compositionally biased stretch (polar residues) spans 385 to 396; sequence THTSSTAITNGL. Residues 459-571 enclose the PH domain; sequence VPTMEGPLRR…WHKHLDDACK (113 aa). Residues 461-585 are required for stimulation of nucleotide exchange by RALA; the sequence is TMEGPLRRKT…QVPANLMSFE (125 aa).

In terms of assembly, interacts with the SH3 domains of GRB2, NCK1, PLCG1 and SRC.

The protein localises to the cytoplasm. It is found in the cell membrane. Its function is as follows. Guanine nucleotide exchange factor for the small GTPase RALA. May be involved in cytoskeleton organization. This is Ras-specific guanine nucleotide-releasing factor RalGPS1 (Ralgps1) from Mus musculus (Mouse).